Here is an 87-residue protein sequence, read N- to C-terminus: DNA-directed RNA polymerase subunit omega (87 aa).

It belongs to the RNA polymerase subunit omega family. The RNAP catalytic core consists of 2 alpha, 1 beta, 1 beta' and 1 omega subunit. When a sigma factor is associated with the core the holoenzyme is formed, which can initiate transcription.

The enzyme catalyses RNA(n) + a ribonucleoside 5'-triphosphate = RNA(n+1) + diphosphate. Functionally, promotes RNA polymerase assembly. Latches the N- and C-terminal regions of the beta' subunit thereby facilitating its interaction with the beta and alpha subunits. The protein is DNA-directed RNA polymerase subunit omega of Pseudomonas putida (strain ATCC 700007 / DSM 6899 / JCM 31910 / BCRC 17059 / LMG 24140 / F1).